The following is a 184-amino-acid chain: Photosystem I assembly protein Ycf4 (184 aa).

Transmembrane regions (helical) follow at residues 21-43 (NFCW…ISSY) and 63-85 (GLVM…CAIS).

This sequence belongs to the Ycf4 family.

The protein localises to the plastid. It localises to the chloroplast thylakoid membrane. Seems to be required for the assembly of the photosystem I complex. This is Photosystem I assembly protein Ycf4 from Spinacia oleracea (Spinach).